Reading from the N-terminus, the 170-residue chain is Protein ripply3 (170 aa).

A WRPW motif motif is present at residues 40 to 43; the sequence is WRPW. The segment at 79–114 is ripply homology domain; it reads HPVRLYMPKSKTSEYLQHMGKKVLANFPVQATIHFY. Residues 143–152 show a composition bias toward polar residues; sequence VNSSRGSGDN. The interval 143–170 is disordered; it reads VNSSRGSGDNYSVPGGPKRNISSHTGSA.

The protein belongs to the ripply family. In terms of assembly, interacts with tbx1 and tle4/grg4.

The protein localises to the nucleus. Functionally, acts as a transcriptional corepressor. Negative regulator of the transcriptional activity of tbx1 that plays a key role in pharyngeal development. Plays a role in the formation of the anteroposterior (AP) axis during embryonic development; required to establish the posterolateral border of the pre-placodal ectoderm (PPE) acting downstream of the retinoic acid receptor (RAR) signaling. This chain is Protein ripply3, found in Xenopus tropicalis (Western clawed frog).